Consider the following 72-residue polypeptide: UPF0352 protein HI_0840 (72 aa).

It belongs to the UPF0352 family.

The polypeptide is UPF0352 protein HI_0840 (Haemophilus influenzae (strain ATCC 51907 / DSM 11121 / KW20 / Rd)).